The following is a 310-amino-acid chain: Porphobilinogen deaminase (310 aa).

The residue at position 242 (Cys242) is an S-(dipyrrolylmethanemethyl)cysteine.

The protein belongs to the HMBS family. As to quaternary structure, monomer. The cofactor is dipyrromethane.

It carries out the reaction 4 porphobilinogen + H2O = hydroxymethylbilane + 4 NH4(+). Its pathway is porphyrin-containing compound metabolism; protoporphyrin-IX biosynthesis; coproporphyrinogen-III from 5-aminolevulinate: step 2/4. Its function is as follows. Tetrapolymerization of the monopyrrole PBG into the hydroxymethylbilane pre-uroporphyrinogen in several discrete steps. In Alcanivorax borkumensis (strain ATCC 700651 / DSM 11573 / NCIMB 13689 / SK2), this protein is Porphobilinogen deaminase.